We begin with the raw amino-acid sequence, 337 residues long: Tetraacyldisaccharide 4'-kinase (337 aa).

An ATP-binding site is contributed by 51-58 (HLGGAGKT).

Belongs to the LpxK family.

It catalyses the reaction a lipid A disaccharide + ATP = a lipid IVA + ADP + H(+). It participates in glycolipid biosynthesis; lipid IV(A) biosynthesis; lipid IV(A) from (3R)-3-hydroxytetradecanoyl-[acyl-carrier-protein] and UDP-N-acetyl-alpha-D-glucosamine: step 6/6. Transfers the gamma-phosphate of ATP to the 4'-position of a tetraacyldisaccharide 1-phosphate intermediate (termed DS-1-P) to form tetraacyldisaccharide 1,4'-bis-phosphate (lipid IVA). This Nitrobacter winogradskyi (strain ATCC 25391 / DSM 10237 / CIP 104748 / NCIMB 11846 / Nb-255) protein is Tetraacyldisaccharide 4'-kinase.